Reading from the N-terminus, the 368-residue chain is Probable dual-specificity RNA methyltransferase RlmN (368 aa).

The active-site Proton acceptor is glutamate 100. Positions 106–344 (QHYGLSVCVT…CVVRQEHGTD (239 aa)) constitute a Radical SAM core domain. The cysteines at positions 113 and 349 are disulfide-linked. Residues cysteine 120, cysteine 124, and cysteine 127 each contribute to the [4Fe-4S] cluster site. S-adenosyl-L-methionine contacts are provided by residues 172 to 173 (GE), serine 204, 227 to 229 (SLH), and asparagine 305. The active-site S-methylcysteine intermediate is the cysteine 349.

It belongs to the radical SAM superfamily. RlmN family. Requires [4Fe-4S] cluster as cofactor.

The protein resides in the cytoplasm. It carries out the reaction adenosine(2503) in 23S rRNA + 2 reduced [2Fe-2S]-[ferredoxin] + 2 S-adenosyl-L-methionine = 2-methyladenosine(2503) in 23S rRNA + 5'-deoxyadenosine + L-methionine + 2 oxidized [2Fe-2S]-[ferredoxin] + S-adenosyl-L-homocysteine. It catalyses the reaction adenosine(37) in tRNA + 2 reduced [2Fe-2S]-[ferredoxin] + 2 S-adenosyl-L-methionine = 2-methyladenosine(37) in tRNA + 5'-deoxyadenosine + L-methionine + 2 oxidized [2Fe-2S]-[ferredoxin] + S-adenosyl-L-homocysteine. In terms of biological role, specifically methylates position 2 of adenine 2503 in 23S rRNA and position 2 of adenine 37 in tRNAs. This is Probable dual-specificity RNA methyltransferase RlmN from Streptococcus agalactiae serotype Ia (strain ATCC 27591 / A909 / CDC SS700).